A 413-amino-acid chain; its full sequence is Arginine biosynthesis bifunctional protein ArgJ (413 aa).

Substrate-binding residues include threonine 158, lysine 184, threonine 195, glutamate 285, asparagine 408, and serine 413. Threonine 195 (nucleophile) is an active-site residue.

This sequence belongs to the ArgJ family. Heterotetramer of two alpha and two beta chains.

The protein resides in the cytoplasm. The catalysed reaction is N(2)-acetyl-L-ornithine + L-glutamate = N-acetyl-L-glutamate + L-ornithine. The enzyme catalyses L-glutamate + acetyl-CoA = N-acetyl-L-glutamate + CoA + H(+). It participates in amino-acid biosynthesis; L-arginine biosynthesis; L-ornithine and N-acetyl-L-glutamate from L-glutamate and N(2)-acetyl-L-ornithine (cyclic): step 1/1. It functions in the pathway amino-acid biosynthesis; L-arginine biosynthesis; N(2)-acetyl-L-ornithine from L-glutamate: step 1/4. Functionally, catalyzes two activities which are involved in the cyclic version of arginine biosynthesis: the synthesis of N-acetylglutamate from glutamate and acetyl-CoA as the acetyl donor, and of ornithine by transacetylation between N(2)-acetylornithine and glutamate. This is Arginine biosynthesis bifunctional protein ArgJ from Bradyrhizobium diazoefficiens (strain JCM 10833 / BCRC 13528 / IAM 13628 / NBRC 14792 / USDA 110).